A 248-amino-acid polypeptide reads, in one-letter code: Probable phosphatase VF_A0065 (248 aa).

Histidine 8, histidine 10, histidine 16, histidine 41, glutamate 74, histidine 102, histidine 132, aspartate 194, and histidine 196 together coordinate Zn(2+).

The protein belongs to the PHP family. The cofactor is Zn(2+).

The sequence is that of Probable phosphatase VF_A0065 from Aliivibrio fischeri (strain ATCC 700601 / ES114) (Vibrio fischeri).